The chain runs to 80 residues: Small ribosomal subunit protein bS18 (80 aa).

It belongs to the bacterial ribosomal protein bS18 family. Part of the 30S ribosomal subunit. Forms a tight heterodimer with protein bS6.

Its function is as follows. Binds as a heterodimer with protein bS6 to the central domain of the 16S rRNA, where it helps stabilize the platform of the 30S subunit. The chain is Small ribosomal subunit protein bS18 from Clostridium perfringens (strain ATCC 13124 / DSM 756 / JCM 1290 / NCIMB 6125 / NCTC 8237 / Type A).